A 157-amino-acid polypeptide reads, in one-letter code: Cytochrome c-type biogenesis protein CcmE (157 aa).

Residues 1–8 (MHPVRKQR) lie on the Cytoplasmic side of the membrane. Residues 9-29 (LMTVLFIVIASSVAVGLMVFA) form a helical; Signal-anchor for type II membrane protein membrane-spanning segment. The Periplasmic segment spans residues 30–157 (LSKNLNLFYP…KTCEGLDYAS (128 aa)). The heme site is built by histidine 124 and tyrosine 128.

This sequence belongs to the CcmE/CycJ family.

It localises to the cell inner membrane. Its function is as follows. Heme chaperone required for the biogenesis of c-type cytochromes. Transiently binds heme delivered by CcmC and transfers the heme to apo-cytochromes in a process facilitated by CcmF and CcmH. The sequence is that of Cytochrome c-type biogenesis protein CcmE from Saccharophagus degradans (strain 2-40 / ATCC 43961 / DSM 17024).